Reading from the N-terminus, the 246-residue chain is Electron transfer flavoprotein beta subunit lysine methyltransferase (246 aa).

The protein belongs to the methyltransferase superfamily. ETFBKMT family.

It is found in the cytoplasm. Its subcellular location is the mitochondrion matrix. The enzyme catalyses L-lysyl-[protein] + 3 S-adenosyl-L-methionine = N(6),N(6),N(6)-trimethyl-L-lysyl-[protein] + 3 S-adenosyl-L-homocysteine + 3 H(+). Protein-lysine methyltransferase that selectively trimethylates the flavoprotein ETFB in mitochondria. Thereby, may negatively regulate the function of ETFB in electron transfer from Acyl-CoA dehydrogenases to the main respiratory chain. The sequence is that of Electron transfer flavoprotein beta subunit lysine methyltransferase (etfbkmt) from Xenopus laevis (African clawed frog).